We begin with the raw amino-acid sequence, 245 residues long: 8-amino-3,8-dideoxy-manno-octulosonate cytidylyltransferase (245 aa).

It belongs to the KdsB family.

The protein resides in the cytoplasm. It catalyses the reaction 8-amino-3,8-dideoxy-alpha-D-manno-octulosonate + CTP = CMP-8-amino-3,8-dideoxy-alpha-D-manno-oct-2-ulosonate + diphosphate. The protein operates within bacterial outer membrane biogenesis; lipopolysaccharide biosynthesis. Functionally, activates KDO8N (a required 8-carbon sugar) for incorporation into bacterial lipopolysaccharide in the Shewanella genus. The protein is 8-amino-3,8-dideoxy-manno-octulosonate cytidylyltransferase of Shewanella woodyi (strain ATCC 51908 / MS32).